Consider the following 475-residue polypeptide: Ankyrin repeat, SAM and basic leucine zipper domain-containing protein 1 (475 aa).

Residues 1-25 form a disordered region; that stretch reads MAAGTLRGLAVAGGGESSDSEDDGW. A phosphoserine mark is found at serine 17, serine 18, and serine 20. 6 ANK repeats span residues 45-74, 78-107, 110-144, 148-177, 181-210, and 214-243; these read EKNETFKKALTTGDISLVKELLDSGINVDS, YGWTPLMYAASVANAELVRFLLDRGANASF, DKLTILISACSARGSEEQVLKCVELLLSRNADPNT, RLMTPIMYAARDGHTQVVALLVAHGAEVNA, NGYTALTWAARQGHKNVILKLLELGANKML, and DGRTPSEIAKRNKHLEIFNFLSLTLNPLEG. Residues 272–334 form the SAM domain; the sequence is PYTAFGDLEI…KILAALKELE (63 aa).

In terms of assembly, interacts with DDX4, PIWIL1, RANBP9 and TDRD1. Expressed exclusively in testis and ovary with higher levels in testis.

It localises to the cytoplasm. Functionally, plays a central role during spermatogenesis by repressing transposable elements and preventing their mobilization, which is essential for the germline integrity. Acts via the piRNA metabolic process, which mediates the repression of transposable elements during meiosis by forming complexes composed of piRNAs and Piwi proteins and governs the methylation and subsequent repression of transposons. Its association with pi-bodies suggests a participation in the primary piRNAs metabolic process. Required prior to the pachytene stage to facilitate the production of multiple types of piRNAs, including those associated with repeats involved in regulation of retrotransposons. May act by mediating protein-protein interactions during germ cell maturation. The polypeptide is Ankyrin repeat, SAM and basic leucine zipper domain-containing protein 1 (Mus musculus (Mouse)).